The sequence spans 809 residues: Penicillin-binding protein 1A (809 aa).

Residues Met1–Thr34 lie on the Cytoplasmic side of the membrane. A helical; Signal-anchor for type II membrane protein membrane pass occupies residues Ile35 to Val55. Residues Lys56–Lys809 are Extracellular-facing. The segment at Ser74–Asn251 is transglycosylase. Catalysis depends on Glu113, which acts as the Proton donor; for transglycosylase activity. The interval Ala381–Lys664 is transpeptidase. Residue Ser422 is the Acyl-ester intermediate; for transpeptidase activity of the active site. Positions Ser694–Lys809 are disordered.

It in the N-terminal section; belongs to the glycosyltransferase 51 family. In the C-terminal section; belongs to the transpeptidase family.

The protein resides in the cell membrane. The enzyme catalyses [GlcNAc-(1-&gt;4)-Mur2Ac(oyl-L-Ala-gamma-D-Glu-L-Lys-D-Ala-D-Ala)](n)-di-trans,octa-cis-undecaprenyl diphosphate + beta-D-GlcNAc-(1-&gt;4)-Mur2Ac(oyl-L-Ala-gamma-D-Glu-L-Lys-D-Ala-D-Ala)-di-trans,octa-cis-undecaprenyl diphosphate = [GlcNAc-(1-&gt;4)-Mur2Ac(oyl-L-Ala-gamma-D-Glu-L-Lys-D-Ala-D-Ala)](n+1)-di-trans,octa-cis-undecaprenyl diphosphate + di-trans,octa-cis-undecaprenyl diphosphate + H(+). It catalyses the reaction Preferential cleavage: (Ac)2-L-Lys-D-Ala-|-D-Ala. Also transpeptidation of peptidyl-alanyl moieties that are N-acyl substituents of D-alanine.. It participates in cell wall biogenesis; peptidoglycan biosynthesis. Functionally, cell wall formation. Synthesis of cross-linked peptidoglycan from the lipid intermediates. The enzyme has a penicillin-insensitive transglycosylase N-terminal domain (formation of linear glycan strands) and a penicillin-sensitive transpeptidase C-terminal domain (cross-linking of the peptide subunits). The polypeptide is Penicillin-binding protein 1A (pbpA) (Clostridium acetobutylicum (strain ATCC 824 / DSM 792 / JCM 1419 / IAM 19013 / LMG 5710 / NBRC 13948 / NRRL B-527 / VKM B-1787 / 2291 / W)).